We begin with the raw amino-acid sequence, 333 residues long: T-cell surface glycoprotein CD1b (333 aa).

The first 17 residues, 1-17 (MLLLPFQLLAVLFPGGN), serve as a signal peptide directing secretion. At 18–303 (SEHAFQGPTS…YWRNPTSIGS (286 aa)) the chain is on the extracellular side. Residues asparagine 38, asparagine 75, and asparagine 146 are each glycosylated (N-linked (GlcNAc...) asparagine). 3 disulfides stabilise this stretch: cysteine 120–cysteine 184, cysteine 149–cysteine 163, and cysteine 224–cysteine 279. One can recognise an Ig-like domain in the interval 185–295 (PRYLLGVLNA…LEGQDIILYW (111 aa)). A glycan (N-linked (GlcNAc...) asparagine) is linked at asparagine 258. A helical transmembrane segment spans residues 304–324 (IVLAIIVPSLLLLLCLALWYM). The Cytoplasmic segment spans residues 325–333 (RRRSYQNIP). The Internalization signal motif lies at 329–332 (YQNI).

Heterodimer with B2M (beta-2-microglobulin). Interacts with saposin C. In terms of tissue distribution, expressed on cortical thymocytes, on certain T-cell leukemias, and in various other tissues.

Its subcellular location is the cell membrane. It localises to the endosome membrane. It is found in the lysosome membrane. Its function is as follows. Antigen-presenting protein that binds self and non-self lipid and glycolipid antigens and presents them to T-cell receptors on natural killer T-cells. This is T-cell surface glycoprotein CD1b (CD1B) from Homo sapiens (Human).